Reading from the N-terminus, the 349-residue chain is Phosphoribosylformylglycinamidine cyclo-ligase (349 aa).

Belongs to the AIR synthase family.

It localises to the cytoplasm. It carries out the reaction 2-formamido-N(1)-(5-O-phospho-beta-D-ribosyl)acetamidine + ATP = 5-amino-1-(5-phospho-beta-D-ribosyl)imidazole + ADP + phosphate + H(+). It participates in purine metabolism; IMP biosynthesis via de novo pathway; 5-amino-1-(5-phospho-D-ribosyl)imidazole from N(2)-formyl-N(1)-(5-phospho-D-ribosyl)glycinamide: step 2/2. The chain is Phosphoribosylformylglycinamidine cyclo-ligase from Listeria monocytogenes serotype 4b (strain CLIP80459).